The primary structure comprises 367 residues: Probable butyrate kinase (367 aa).

It belongs to the acetokinase family.

Its subcellular location is the cytoplasm. The enzyme catalyses butanoate + ATP = butanoyl phosphate + ADP. In Bacillus cereus (strain Q1), this protein is Probable butyrate kinase.